The sequence spans 79 residues: Cyclin-dependent kinases regulatory subunit 2 (79 aa).

The residue at position 4 (Lys4) is an N6-acetyllysine.

It belongs to the CKS family. In terms of assembly, forms a homohexamer that can probably bind six kinase subunits.

Its function is as follows. Binds to the catalytic subunit of the cyclin dependent kinases and is essential for their biological function. The polypeptide is Cyclin-dependent kinases regulatory subunit 2 (Cks2) (Mus musculus (Mouse)).